A 478-amino-acid polypeptide reads, in one-letter code: MAEQEKEATLPSKENFSEWYNGMLQIAEIMDVRYPVKGSYVWYPFGFSIRRNVYDIIRGLLDKDHQETLFPLLIPENEFMKEAEHIKGFEEEVYWVLNGGTTPLDVKLALRPTSETAIYPMYRLWVRSHADLPLKLYQIVNTFRYETKHTRPLIRLREITSFKEAHTVHATWDEAASQVEEAIRLYIEFYKRLAIPVLPSKRPSWDKFPGADYTIAVDSLMPDGKTLQVGTAHHLGDNFAKTFDIKYEDVDGEQVYAHQTCYGVSERCIATLLSTHGDDKGLVLPPEVAPTQVVIIPIIFKEPEAVLNACNDVKAELEAAGVRVTIDDSDKRPGSKYYKWEMKGVPLRIEIGPRDLKNEAAMLARRDTGEKEQVPLASIKDEVLSRFKIIQTSLLEKATSELNERIFDCSTVDDVKEKVQDGIALVPWCGEEKCGLDLDEQVGAGILGIPTDMDEDGTYKCPICSKETRTRVYVARTY.

The protein belongs to the class-II aminoacyl-tRNA synthetase family. ProS type 3 subfamily. In terms of assembly, homodimer.

It is found in the cytoplasm. It catalyses the reaction tRNA(Pro) + L-proline + ATP = L-prolyl-tRNA(Pro) + AMP + diphosphate. Catalyzes the attachment of proline to tRNA(Pro) in a two-step reaction: proline is first activated by ATP to form Pro-AMP and then transferred to the acceptor end of tRNA(Pro). This Methanococcoides burtonii (strain DSM 6242 / NBRC 107633 / OCM 468 / ACE-M) protein is Proline--tRNA ligase.